The primary structure comprises 382 residues: Anhydro-N-acetylmuramic acid kinase (382 aa).

22–29 (GTSMDGVD) is a binding site for ATP.

It belongs to the anhydro-N-acetylmuramic acid kinase family.

It catalyses the reaction 1,6-anhydro-N-acetyl-beta-muramate + ATP + H2O = N-acetyl-D-muramate 6-phosphate + ADP + H(+). It functions in the pathway amino-sugar metabolism; 1,6-anhydro-N-acetylmuramate degradation. Its pathway is cell wall biogenesis; peptidoglycan recycling. Catalyzes the specific phosphorylation of 1,6-anhydro-N-acetylmuramic acid (anhMurNAc) with the simultaneous cleavage of the 1,6-anhydro ring, generating MurNAc-6-P. Is required for the utilization of anhMurNAc either imported from the medium or derived from its own cell wall murein, and thus plays a role in cell wall recycling. This chain is Anhydro-N-acetylmuramic acid kinase, found in Burkholderia cenocepacia (strain ATCC BAA-245 / DSM 16553 / LMG 16656 / NCTC 13227 / J2315 / CF5610) (Burkholderia cepacia (strain J2315)).